A 168-amino-acid polypeptide reads, in one-letter code: Alpha-amylase/trypsin inhibitor CM3 (168 aa).

The N-terminal stretch at 1 to 25 (MACKSSCSLLLLAAVLLSVLAAASA) is a signal peptide.

It belongs to the protease inhibitor I6 (cereal trypsin/alpha-amylase inhibitor) family. In terms of assembly, subunit of the tetrameric inhibitor. Post-translationally, five disulfide bonds, which are essential for the inhibitor activity, are probably present. Developing endosperm.

It localises to the secreted. Its function is as follows. Alpha-amylase/trypsin inhibitor. It could be involved in insect defense mechanisms. This is Alpha-amylase/trypsin inhibitor CM3 from Triticum aestivum (Wheat).